The chain runs to 232 residues: Large ribosomal subunit protein uL1 (232 aa).

This sequence belongs to the universal ribosomal protein uL1 family. As to quaternary structure, part of the 50S ribosomal subunit.

Its function is as follows. Binds directly to 23S rRNA. The L1 stalk is quite mobile in the ribosome, and is involved in E site tRNA release. Protein L1 is also a translational repressor protein, it controls the translation of the L11 operon by binding to its mRNA. The sequence is that of Large ribosomal subunit protein uL1 from Bacteroides thetaiotaomicron (strain ATCC 29148 / DSM 2079 / JCM 5827 / CCUG 10774 / NCTC 10582 / VPI-5482 / E50).